Consider the following 70-residue polypeptide: Cytochrome c oxidase subunit 8B, mitochondrial (70 aa).

Residues 1 to 24 (MPRLPPILRLLQAPAKFTVVPKAH) constitute a mitochondrion transit peptide. Topologically, residues 25–38 (VSAKPAKTPTSAVE) are mitochondrial matrix. The chain crosses the membrane as a helical span at residues 39-60 (QAVGISAIVVGFMVPAGWVLAH). The Mitochondrial intermembrane portion of the chain corresponds to 61-70 (LESYKKSSAA).

It belongs to the cytochrome c oxidase VIII family. In terms of assembly, component of the cytochrome c oxidase (complex IV, CIV), a multisubunit enzyme composed of 14 subunits. The complex is composed of a catalytic core of 3 subunits MT-CO1, MT-CO2 and MT-CO3, encoded in the mitochondrial DNA, and 11 supernumerary subunits COX4I, COX5A, COX5B, COX6A, COX6B, COX6C, COX7A, COX7B, COX7C, COX8 and NDUFA4, which are encoded in the nuclear genome. The complex exists as a monomer or a dimer and forms supercomplexes (SCs) in the inner mitochondrial membrane with NADH-ubiquinone oxidoreductase (complex I, CI) and ubiquinol-cytochrome c oxidoreductase (cytochrome b-c1 complex, complex III, CIII), resulting in different assemblies (supercomplex SCI(1)III(2)IV(1) and megacomplex MCI(2)III(2)IV(2)).

The protein resides in the mitochondrion inner membrane. It participates in energy metabolism; oxidative phosphorylation. Component of the cytochrome c oxidase, the last enzyme in the mitochondrial electron transport chain which drives oxidative phosphorylation. The respiratory chain contains 3 multisubunit complexes succinate dehydrogenase (complex II, CII), ubiquinol-cytochrome c oxidoreductase (cytochrome b-c1 complex, complex III, CIII) and cytochrome c oxidase (complex IV, CIV), that cooperate to transfer electrons derived from NADH and succinate to molecular oxygen, creating an electrochemical gradient over the inner membrane that drives transmembrane transport and the ATP synthase. Cytochrome c oxidase is the component of the respiratory chain that catalyzes the reduction of oxygen to water. Electrons originating from reduced cytochrome c in the intermembrane space (IMS) are transferred via the dinuclear copper A center (CU(A)) of subunit 2 and heme A of subunit 1 to the active site in subunit 1, a binuclear center (BNC) formed by heme A3 and copper B (CU(B)). The BNC reduces molecular oxygen to 2 water molecules using 4 electrons from cytochrome c in the IMS and 4 protons from the mitochondrial matrix. This is Cytochrome c oxidase subunit 8B, mitochondrial (Cox8b) from Mus musculus (Mouse).